We begin with the raw amino-acid sequence, 446 residues long: 5-methylthioadenosine/S-adenosylhomocysteine deaminase (446 aa).

Zn(2+)-binding residues include His-72 and His-74. 2 residues coordinate substrate: Glu-101 and His-194. His-221 provides a ligand contact to Zn(2+). The substrate site is built by Glu-224 and Asp-309. Asp-309 contributes to the Zn(2+) binding site.

It belongs to the metallo-dependent hydrolases superfamily. MTA/SAH deaminase family. The cofactor is Zn(2+).

The catalysed reaction is S-adenosyl-L-homocysteine + H2O + H(+) = S-inosyl-L-homocysteine + NH4(+). It catalyses the reaction S-methyl-5'-thioadenosine + H2O + H(+) = S-methyl-5'-thioinosine + NH4(+). In terms of biological role, catalyzes the deamination of 5-methylthioadenosine and S-adenosyl-L-homocysteine into 5-methylthioinosine and S-inosyl-L-homocysteine, respectively. Is also able to deaminate adenosine. The chain is 5-methylthioadenosine/S-adenosylhomocysteine deaminase from Saccharophagus degradans (strain 2-40 / ATCC 43961 / DSM 17024).